The sequence spans 195 residues: Xanthine phosphoribosyltransferase (195 aa).

Xanthine is bound by residues L20 and N27. 128–132 (ANGQA) contacts 5-phospho-alpha-D-ribose 1-diphosphate. K156 contacts xanthine.

It belongs to the purine/pyrimidine phosphoribosyltransferase family. Xpt subfamily. In terms of assembly, homodimer.

The protein resides in the cytoplasm. The catalysed reaction is XMP + diphosphate = xanthine + 5-phospho-alpha-D-ribose 1-diphosphate. The protein operates within purine metabolism; XMP biosynthesis via salvage pathway; XMP from xanthine: step 1/1. Functionally, converts the preformed base xanthine, a product of nucleic acid breakdown, to xanthosine 5'-monophosphate (XMP), so it can be reused for RNA or DNA synthesis. The protein is Xanthine phosphoribosyltransferase of Lactiplantibacillus plantarum (strain ATCC BAA-793 / NCIMB 8826 / WCFS1) (Lactobacillus plantarum).